A 298-amino-acid chain; its full sequence is Plasmodesmata-located protein 7 (298 aa).

The N-terminal stretch at 1 to 30 is a signal peptide; the sequence is MPMAKLRNIIKTLSIFFFLIAATAPSLSSA. At 31-258 the chain is on the extracellular side; the sequence is TSATDTFVFG…YKTNYGGEKT (228 aa). 2 consecutive Gnk2-homologous domains span residues 35–139 and 140–240; these read DTFV…NISF and LGQE…TDGA. 6 cysteine pairs are disulfide-bonded: cysteine 42-cysteine 117, cysteine 93-cysteine 102, cysteine 105-cysteine 130, cysteine 152-cysteine 218, cysteine 194-cysteine 203, and cysteine 206-cysteine 231. Residues 259 to 279 traverse the membrane as a helical segment; sequence FAIIIGLLAAVVLLIIFLLFL. The tract at residues 259–279 is necessary and sufficient for plasmodesmal targeting; sequence FAIIIGLLAAVVLLIIFLLFL. Topologically, residues 280 to 298 are cytoplasmic; the sequence is RGVCSRGGDFSILHSFTLI.

It belongs to the cysteine-rich repeat secretory protein family. Plasmodesmata-located proteins (PDLD) subfamily. As to quaternary structure, (Microbial infection) Interacts with Grapevine fanleaf virus (GFLV) 2B-MP. Highly expressed in lateral root and elongation zone.

Its subcellular location is the cell membrane. The protein resides in the cell junction. It is found in the plasmodesma. Functionally, modulates cell-to-cell trafficking. The sequence is that of Plasmodesmata-located protein 7 from Arabidopsis thaliana (Mouse-ear cress).